Reading from the N-terminus, the 251-residue chain is 5-oxoprolinase subunit A 3 (251 aa).

The protein belongs to the LamB/PxpA family. In terms of assembly, forms a complex composed of PxpA, PxpB and PxpC.

The catalysed reaction is 5-oxo-L-proline + ATP + 2 H2O = L-glutamate + ADP + phosphate + H(+). In terms of biological role, catalyzes the cleavage of 5-oxoproline to form L-glutamate coupled to the hydrolysis of ATP to ADP and inorganic phosphate. In Pseudomonas aeruginosa (strain ATCC 15692 / DSM 22644 / CIP 104116 / JCM 14847 / LMG 12228 / 1C / PRS 101 / PAO1), this protein is 5-oxoprolinase subunit A 3.